A 2458-amino-acid polypeptide reads, in one-letter code: Highly reducing polyketide synthase alnA (2458 aa).

Residues 48–473 (TMPIAIVGMA…GANAHVILDD (426 aa)) form the Ketosynthase family 3 (KS3) domain. Active-site for beta-ketoacyl synthase activity residues include C221, H356, and H396. Residues 488-515 (HTTLSESEDSSDSGLEMDSSTSDSGEGQ) are disordered. Residues 499 to 515 (DSGLEMDSSTSDSGEGQ) show a composition bias toward low complexity. The malonyl-CoA:ACP transacylase (MAT) domain stretch occupies residues 609–932 (VFTGQGAQWP…PYMSVLSRGK (324 aa)). The active-site For malonyltransferase activity is the S697. The N-terminal hotdog fold stretch occupies residues 1000–1130 (NDLLGVPVAQ…GSFSLHYEDA (131 aa)). In terms of domain architecture, PKS/mFAS DH spans 1000-1307 (NDLLGVPVAQ…VTEVSAGAST (308 aa)). Positions 1001–1305 (DLLGVPVAQQ…MTVTEVSAGA (305 aa)) are dehydratase (DH) domain. H1032 serves as the catalytic Proton acceptor; for dehydratase activity. A C-terminal hotdog fold region spans residues 1148–1307 (TRACRKLDVE…VTEVSAGAST (160 aa)). The active-site Proton donor; for dehydratase activity is D1218. The tract at residues 1740 to 2051 (GSPSQARWVP…GQQQHERVAA (312 aa)) is enoylreductase (ER) domain. Positions 2076–2264 (KPDATYILAG…VTDASHFNEN (189 aa)) are ketoreductase (KR) domain. In terms of domain architecture, Carrier spans 2359-2441 (STTVAQAHEV…RLALKIVSKS (83 aa)). Position 2401 is an O-(pantetheine 4'-phosphoryl)serine (S2401).

Its pathway is polyketide biosynthesis. Highly reducing polyketide synthase; part of the gene cluster that mediates the biosynthesis of asperlin, a polyketide showing anti-inflammatory, antitumor and antibiotic activities. The first step of the asperlin biosynthesis is the production of the intermediate 2,4,6-octatrienoic acid by the highly redusing polyketide synthase alnA with cleavage of the PKS product by the esterase alnB. 2,4,6-octatrienoic acid is further converted to asperlin via several steps involving the remaining enzymes from the cluster. The sequence is that of Highly reducing polyketide synthase alnA from Emericella nidulans (strain FGSC A4 / ATCC 38163 / CBS 112.46 / NRRL 194 / M139) (Aspergillus nidulans).